We begin with the raw amino-acid sequence, 323 residues long: MGRRSFIRGTGSYLPERVLTNDELSEMVETTDAWIQERTGIKKRHVAADGELTSDIAVHAARRALEAAGMQASEIDLIVLATTTPDQTFPATATAVQAKLGTGPGAAFDVQAVCSGFLFALATADSLMKQGLFHKALVIGAETFTRIIDWSDRGTCVLFGDGGGAIVLECVEWDGADDAGVITHHVRTDGTKSNLLYVDGGVSSTGTIGHVRMEGNKVFKHAVTNISAAIEAVLTETGLTSADIDWFVPHQANKRILDGVAKKMSIPEEKVVITVSEHANTSAASIPLALDHVVRSGRAKPGDLILSEAMGGGFSWGASLFRL.

Catalysis depends on residues cysteine 114 and histidine 250. Positions 251–255 are ACP-binding; that stretch reads QANKR. The active site involves asparagine 280.

The protein belongs to the thiolase-like superfamily. FabH family. As to quaternary structure, homodimer.

It is found in the cytoplasm. It catalyses the reaction malonyl-[ACP] + acetyl-CoA + H(+) = 3-oxobutanoyl-[ACP] + CO2 + CoA. It functions in the pathway lipid metabolism; fatty acid biosynthesis. Functionally, catalyzes the condensation reaction of fatty acid synthesis by the addition to an acyl acceptor of two carbons from malonyl-ACP. Catalyzes the first condensation reaction which initiates fatty acid synthesis and may therefore play a role in governing the total rate of fatty acid production. Possesses both acetoacetyl-ACP synthase and acetyl transacylase activities. Its substrate specificity determines the biosynthesis of branched-chain and/or straight-chain of fatty acids. This chain is Beta-ketoacyl-[acyl-carrier-protein] synthase III, found in Hyphomonas neptunium (strain ATCC 15444).